We begin with the raw amino-acid sequence, 429 residues long: Probable beta-1,3-galactosyl-O-glycosyl-glycoprotein beta-1,6-N-acetylglucosaminyltransferase 7 (429 aa).

Residues 1–8 are Cytoplasmic-facing; sequence MSQLRATK. A helical; Signal-anchor for type II membrane protein transmembrane segment spans residues 9–25; sequence PGILVCAAIGIFVFLYL. Topologically, residues 26–429 are extracellular; that stretch reads RNPTSEDPEE…ESHLNRRLNP (404 aa). Disulfide bonds link Cys-53–Cys-205, Cys-139–Cys-354, Cys-160–Cys-187, and Cys-363–Cys-394. The N-linked (GlcNAc...) asparagine glycan is linked to Asn-87. Asn-272 carries N-linked (GlcNAc...) asparagine glycosylation.

Belongs to the glycosyltransferase 14 family.

The protein resides in the golgi apparatus membrane. The protein operates within protein modification; protein glycosylation. Probable glycosyltransferase. This is Probable beta-1,3-galactosyl-O-glycosyl-glycoprotein beta-1,6-N-acetylglucosaminyltransferase 7 from Sus scrofa (Pig).